The chain runs to 852 residues: Probable LRR receptor-like serine/threonine-protein kinase At1g05700 (852 aa).

Residues 1-25 (MEEFRFLYLIYSAAFALCLVVSVLA) form the signal peptide. Residues 26-510 (QDQSGFISID…SCRKSNSKKL (485 aa)) are Extracellular-facing. N-linked (GlcNAc...) asparagine glycosylation is found at N138, N182, N231, N240, N258, N293, N400, N415, and N431. LRR repeat units follow at residues 410–432 (RITS…FSNL), 434–457 (MIQE…SKLK), and 458–479 (FLRV…ELLE). An N-linked (GlcNAc...) asparagine glycan is attached at N466. A helical membrane pass occupies residues 511 to 531 (VIPLVASFAALFILLLLSGVF). Residues 532–852 (WRIRNRRNKS…LQREESNKNY (321 aa)) are Cytoplasmic-facing. T561 is modified (phosphothreonine). Positions 570-843 (NNFGQVLGKG…HIVRGLNECL (274 aa)) constitute a Protein kinase domain. ATP-binding positions include 576–584 (LGKGGFGTV) and K597. Y642 bears the Phosphotyrosine mark. D693 (proton acceptor) is an active-site residue. Phosphoserine is present on residues S697 and S727. 2 positions are modified to phosphothreonine: T728 and T733.

It belongs to the protein kinase superfamily. Ser/Thr protein kinase family.

It is found in the membrane. It catalyses the reaction L-seryl-[protein] + ATP = O-phospho-L-seryl-[protein] + ADP + H(+). The catalysed reaction is L-threonyl-[protein] + ATP = O-phospho-L-threonyl-[protein] + ADP + H(+). The sequence is that of Probable LRR receptor-like serine/threonine-protein kinase At1g05700 from Arabidopsis thaliana (Mouse-ear cress).